A 78-amino-acid chain; its full sequence is Large ribosomal subunit protein eL38 (78 aa).

This sequence belongs to the eukaryotic ribosomal protein eL38 family.

The polypeptide is Large ribosomal subunit protein eL38 (RpL38) (Maconellicoccus hirsutus (Pink hibiscus mealybug)).